A 194-amino-acid chain; its full sequence is dCTP deaminase, dUMP-forming (194 aa).

DCTP contacts are provided by residues R104–R109, D122, T130–E132, Q151, Y165, K172, and Q176. Catalysis depends on E132, which acts as the Proton donor/acceptor.

The protein belongs to the dCTP deaminase family. Homotrimer.

The catalysed reaction is dCTP + 2 H2O = dUMP + NH4(+) + diphosphate. Its pathway is pyrimidine metabolism; dUMP biosynthesis; dUMP from dCTP: step 1/1. Its function is as follows. Bifunctional enzyme that catalyzes both the deamination of dCTP to dUTP and the hydrolysis of dUTP to dUMP without releasing the toxic dUTP intermediate. This Dictyoglomus turgidum (strain DSM 6724 / Z-1310) protein is dCTP deaminase, dUMP-forming.